A 299-amino-acid polypeptide reads, in one-letter code: Phosphatidylcholine-sterol acyltransferase (299 aa).

The N-linked (GlcNAc...) asparagine glycan is linked to Asn30. The active-site Nucleophile is Ser127. A glycan (N-linked (GlcNAc...) asparagine) is linked at Asn185. Cys226 and Cys269 are oxidised to a cystine. Residues Asp258 and His290 each act as charge relay system in the active site.

Belongs to the AB hydrolase superfamily. Lipase family.

Its subcellular location is the secreted. It carries out the reaction a sterol + a 1,2-diacyl-sn-glycero-3-phosphocholine = a sterol ester + a 1-acyl-sn-glycero-3-phosphocholine. With respect to regulation, APOA1 is the most potent activator in plasma. Also activated by APOE, APOC1 and APOA4. Its function is as follows. Central enzyme in the extracellular metabolism of plasma lipoproteins. Synthesized mainly in the liver and secreted into plasma where it converts cholesterol and phosphatidylcholines (lecithins) to cholesteryl esters and lysophosphatidylcholines on the surface of high and low density lipoproteins (HDLs and LDLs). The cholesterol ester is then transported back to the liver. Has a preference for plasma 16:0-18:2 or 18:O-18:2 phosphatidylcholines. Also produced in the brain by primary astrocytes, and esterifies free cholesterol on nascent APOE-containing lipoproteins secreted from glia and influences cerebral spinal fluid (CSF) APOE- and APOA1 levels. Together with APOE and the cholesterol transporter ABCA1, plays a key role in the maturation of glial-derived, nascent lipoproteins. Required for remodeling high-density lipoprotein particles into their spherical forms. In Eliomys quercinus (Garden dormouse), this protein is Phosphatidylcholine-sterol acyltransferase (LCAT).